The chain runs to 187 residues: Adenine phosphoribosyltransferase (187 aa).

Belongs to the purine/pyrimidine phosphoribosyltransferase family. In terms of assembly, homodimer.

It is found in the cytoplasm. It catalyses the reaction AMP + diphosphate = 5-phospho-alpha-D-ribose 1-diphosphate + adenine. It participates in purine metabolism; AMP biosynthesis via salvage pathway; AMP from adenine: step 1/1. In terms of biological role, catalyzes a salvage reaction resulting in the formation of AMP, that is energically less costly than de novo synthesis. This is Adenine phosphoribosyltransferase from Yersinia pseudotuberculosis serotype O:3 (strain YPIII).